Consider the following 847-residue polypeptide: Phenylalanine--tRNA ligase beta subunit (847 aa).

Residues 40–168 (FGIEGPVVVG…LDPEVGADAV (129 aa)) form the tRNA-binding domain. One can recognise a B5 domain in the interval 426 to 501 (ADAEPIRLPD…RIVGFDRIPS (76 aa)). Mg(2+)-binding residues include D479, D485, E488, and E489. An FDX-ACB domain is found at 753 to 846 (AGFPAATQDL…AGQLFGAAIR (94 aa)).

It belongs to the phenylalanyl-tRNA synthetase beta subunit family. Type 1 subfamily. As to quaternary structure, tetramer of two alpha and two beta subunits. Requires Mg(2+) as cofactor.

The protein localises to the cytoplasm. It catalyses the reaction tRNA(Phe) + L-phenylalanine + ATP = L-phenylalanyl-tRNA(Phe) + AMP + diphosphate + H(+). This is Phenylalanine--tRNA ligase beta subunit from Leifsonia xyli subsp. xyli (strain CTCB07).